The primary structure comprises 85 residues: U4-theraphotoxin-Hhn1a (85 aa).

An N-terminal signal peptide occupies residues 1 to 22; the sequence is MKVTLIAILTCAAVLVLRTTAA. The propeptide occupies 23 to 48; sequence EELEAESQLMEVGMPDTELAAVDEER. Intrachain disulfides connect Cys-52–Cys-66, Cys-56–Cys-77, and Cys-71–Cys-82.

It belongs to the neurotoxin 12 (Hwtx-2) family. 02 (Hwtx-2) subfamily. In terms of assembly, monomer. As to expression, expressed by the venom gland.

It is found in the secreted. Neurotoxin active on both insects and mammals. The polypeptide is U4-theraphotoxin-Hhn1a (Cyriopagopus hainanus (Chinese bird spider)).